Reading from the N-terminus, the 506-residue chain is Probable malate:quinone oxidoreductase (506 aa).

Belongs to the MQO family. Requires FAD as cofactor.

The catalysed reaction is (S)-malate + a quinone = a quinol + oxaloacetate. It functions in the pathway carbohydrate metabolism; tricarboxylic acid cycle; oxaloacetate from (S)-malate (quinone route): step 1/1. The polypeptide is Probable malate:quinone oxidoreductase (Rhodococcus jostii (strain RHA1)).